The primary structure comprises 123 residues: Large ribosomal subunit protein uL14 (123 aa).

It belongs to the universal ribosomal protein uL14 family. In terms of assembly, part of the 50S ribosomal subunit. Forms a cluster with proteins L3 and L19. In the 70S ribosome, L14 and L19 interact and together make contacts with the 16S rRNA in bridges B5 and B8.

Functionally, binds to 23S rRNA. Forms part of two intersubunit bridges in the 70S ribosome. This Tropheryma whipplei (strain TW08/27) (Whipple's bacillus) protein is Large ribosomal subunit protein uL14.